The primary structure comprises 79 residues: DNA gyrase inhibitor YacG (79 aa).

Zn(2+)-binding residues include Cys7, Cys10, Cys26, and Cys30.

Belongs to the DNA gyrase inhibitor YacG family. As to quaternary structure, interacts with GyrB. Requires Zn(2+) as cofactor.

Its function is as follows. Inhibits all the catalytic activities of DNA gyrase by preventing its interaction with DNA. Acts by binding directly to the C-terminal domain of GyrB, which probably disrupts DNA binding by the gyrase. This Shewanella halifaxensis (strain HAW-EB4) protein is DNA gyrase inhibitor YacG.